The primary structure comprises 79 residues: MSYKNIYYSDKYTDEHFEYRHVMLPKELAKQVPKTHLMSEEEWRRLGVQQSLGWVHYMIHEPEPHILLFRRPLPKDQQK.

The protein belongs to the CKS family. As to quaternary structure, forms a homohexamer that can probably bind six kinase subunits.

Functionally, binds to the catalytic subunit of the cyclin dependent kinases and is essential for their biological function. The polypeptide is Cyclin-dependent kinases regulatory subunit 2 (cks2) (Xenopus laevis (African clawed frog)).